The primary structure comprises 577 residues: Moesin (577 aa).

In terms of domain architecture, FERM spans 2 to 295 (PKTISVRVTT…GNHELYMRRR (294 aa)). Ser74 is modified (phosphoserine). Lys79 carries the N6-acetyllysine modification. Lys83 is modified (N6-succinyllysine). Residues 115–120 (IYCPPE) carry the [IL]-x-C-x-x-[DE] motif motif. Tyr116 carries the post-translational modification Phosphotyrosine. The residue at position 117 (Cys117) is an S-nitrosocysteine. An N6-acetyllysine mark is found at Lys139 and Lys165. Disordered stretches follow at residues 322-342 (LLEN…KIER), 358-453 (TKKA…QMVQ), and 468-549 (STPH…AENM). A compositionally biased stretch (basic and acidic residues) spans 358 to 401 (TKKAQQELEEQTRRALELEQERKRAQSEAEKLAKERQEAEEAKE). Ser407 carries the phosphoserine modification. 2 stretches are compositionally biased toward basic and acidic residues: residues 438–447 (KESEAEECHQ) and 492–519 (AELR…ERVQ). Ser527 bears the Phosphoserine mark. The segment covering 531-549 (NARDESKKTTNDMIHAENM) has biased composition (basic and acidic residues). Thr558 bears the Phosphothreonine; by ROCK2 and STK10 mark.

As to quaternary structure, in resting T-cells, part of a PAG1-NHERF1-MSN complex which is disrupted upon TCR activation. Interacts with NHERF1. Interacts with PPP1R16B. Interacts with PDZD8. Interacts with SELPLG and SYK; these interactions mediate the activation of SYK by SELPLG. Interacts with PDPN (via cytoplasmic domain); this interaction activates RHOA and promotes epithelial-mesenchymal transition. Interacts with SPN/CD43 cytoplasmic tail. Interacts with CD44. Interacts with ICAM2. Interacts with ICAM3 (via C-terminus). Interacts with PDZD8. Interacts with F-actin. Interacts with CD46. Interacts with PTPN6. Phosphorylation on Thr-558 is crucial for the formation of microvilli-like structures. Phosphorylation by ROCK2 suppresses the head-to-tail association of the N-terminal and C-terminal halves resulting in an opened conformation which is capable of actin and membrane-binding. Phosphorylation on Thr-558 by STK10 negatively regulates lymphocyte migration and polarization. In terms of processing, S-nitrosylation of Cys-117 is induced by interferon-gamma and oxidatively-modified low-densitity lipoprotein (LDL(ox)) implicating the iNOS-S100A8/9 transnitrosylase complex.

It localises to the cell membrane. The protein localises to the cytoplasm. It is found in the cytoskeleton. The protein resides in the apical cell membrane. Its subcellular location is the cell projection. It localises to the microvillus membrane. The protein localises to the microvillus. With respect to regulation, a head-to-tail association, of the N-terminal and C-terminal halves results in a closed conformation (inactive form) which is incapable of actin or membrane-binding. In terms of biological role, ezrin-radixin-moesin (ERM) family protein that connects the actin cytoskeleton to the plasma membrane and thereby regulates the structure and function of specific domains of the cell cortex. Tethers actin filaments by oscillating between a resting and an activated state providing transient interactions between moesin and the actin cytoskeleton. Once phosphorylated on its C-terminal threonine, moesin is activated leading to interaction with F-actin and cytoskeletal rearrangement. These rearrangements regulate many cellular processes, including cell shape determination, membrane transport, and signal transduction. The role of moesin is particularly important in immunity acting on both T and B-cells homeostasis and self-tolerance, regulating lymphocyte egress from lymphoid organs. Modulates phagolysosomal biogenesis in macrophages. Participates also in immunologic synapse formation. The chain is Moesin from Rattus norvegicus (Rat).